The chain runs to 807 residues: Protein FAR1-RELATED SEQUENCE 2 (807 aa).

Residues Y52–P138 form the FAR1 domain. The 97-residue stretch at V219–S315 folds into the MULE domain. The SWIM-type zinc finger occupies F499–D535. The stretch at E660–A680 forms a coiled coil. Polar residues predominate over residues G788–S798. A disordered region spans residues G788–N807.

Belongs to the FHY3/FAR1 family. As to expression, expressed in hypocotyls, rosette and cauline leaves, inflorescences stems, flowers and siliques.

It is found in the nucleus. Its function is as follows. Putative transcription activator involved in regulating light control of development. This is Protein FAR1-RELATED SEQUENCE 2 (FRS2) from Arabidopsis thaliana (Mouse-ear cress).